Reading from the N-terminus, the 257-residue chain is Putative hydro-lyase Bphy_2364 (257 aa).

The protein belongs to the D-glutamate cyclase family.

The protein is Putative hydro-lyase Bphy_2364 of Paraburkholderia phymatum (strain DSM 17167 / CIP 108236 / LMG 21445 / STM815) (Burkholderia phymatum).